The chain runs to 272 residues: Putative hydro-lyase BBta_2883 (272 aa).

Belongs to the D-glutamate cyclase family.

This Bradyrhizobium sp. (strain BTAi1 / ATCC BAA-1182) protein is Putative hydro-lyase BBta_2883.